The primary structure comprises 66 residues: Alpha-like toxin BeM9 (66 aa).

Residues 2–66 form the LCN-type CS-alpha/beta domain; the sequence is RDAYIAKPHN…VPIRIPGKCH (65 aa). Cystine bridges form between cysteine 12-cysteine 65, cysteine 16-cysteine 38, cysteine 24-cysteine 48, and cysteine 28-cysteine 50.

Belongs to the long (4 C-C) scorpion toxin superfamily. Sodium channel inhibitor family. Alpha subfamily. In terms of tissue distribution, expressed by the venom gland.

Its subcellular location is the secreted. Its function is as follows. Alpha toxins bind voltage-independently at site-3 of sodium channels (Nav) and inhibit the inactivation of the activated channels, thereby blocking neuronal transmission. This toxin is active on both mammals and insects, since it inhibits inactivation of rNav1.4/SCN4A, hNav1.5/SCN5A, mNav1.6/SCN8A and insect BgNav1 and DmNav1 channels. In vivo, it shows paralytic activity in mice. This chain is Alpha-like toxin BeM9, found in Mesobuthus eupeus (Lesser Asian scorpion).